The sequence spans 189 residues: Small ribosomal subunit protein uS5 (189 aa).

Positions 22–85 (FVDKLVAINR…EAAKRDLIFV (64 aa)) constitute an S5 DRBM domain.

Belongs to the universal ribosomal protein uS5 family. In terms of assembly, part of the 30S ribosomal subunit. Contacts proteins S4 and S8.

Functionally, with S4 and S12 plays an important role in translational accuracy. In terms of biological role, located at the back of the 30S subunit body where it stabilizes the conformation of the head with respect to the body. In Sinorhizobium fredii (strain NBRC 101917 / NGR234), this protein is Small ribosomal subunit protein uS5.